Consider the following 318-residue polypeptide: tRNA dimethylallyltransferase (318 aa).

28-35 is a binding site for ATP; sequence GPTGAGKS. 30–35 is a binding site for substrate; sequence TGAGKS. The interval 53–56 is interaction with substrate tRNA; it reads DSMQ.

This sequence belongs to the IPP transferase family. In terms of assembly, monomer. Mg(2+) is required as a cofactor.

It catalyses the reaction adenosine(37) in tRNA + dimethylallyl diphosphate = N(6)-dimethylallyladenosine(37) in tRNA + diphosphate. Catalyzes the transfer of a dimethylallyl group onto the adenine at position 37 in tRNAs that read codons beginning with uridine, leading to the formation of N6-(dimethylallyl)adenosine (i(6)A). In Parafrankia sp. (strain EAN1pec), this protein is tRNA dimethylallyltransferase.